The sequence spans 202 residues: Lymphotoxin-alpha (202 aa).

A signal peptide spans Met1–Gly33. Residues Pro60 to Leu202 enclose the THD domain. N-linked (GlcNAc...) asparagine glycosylation occurs at Asn93.

Belongs to the tumor necrosis factor family. As to quaternary structure, homotrimer, and heterotrimer of either two LTB and one LTA subunits or (less prevalent) two LTA and one LTB subunits. Interacts with TNFRSF14.

The protein localises to the secreted. The protein resides in the membrane. Functionally, cytokine that in its homotrimeric form binds to TNFRSF1A/TNFR1, TNFRSF1B/TNFBR and TNFRSF14/HVEM. In its heterotrimeric form with LTB binds to TNFRSF3/LTBR. Lymphotoxin is produced by lymphocytes and is cytotoxic for a wide range of tumor cells in vitro and in vivo. The chain is Lymphotoxin-alpha (Lta) from Rattus norvegicus (Rat).